Consider the following 190-residue polypeptide: Probable E3 ubiquitin-protein ligase RHB1A (190 aa).

Residues 139 to 180 (CPICFEDYDVENPRLTTKCEHEFHLSCLLEWIERSDRCPICD) form an RING-type; atypical zinc finger.

It catalyses the reaction S-ubiquitinyl-[E2 ubiquitin-conjugating enzyme]-L-cysteine + [acceptor protein]-L-lysine = [E2 ubiquitin-conjugating enzyme]-L-cysteine + N(6)-ubiquitinyl-[acceptor protein]-L-lysine.. It functions in the pathway protein modification; protein ubiquitination. Functionally, probable E3 ubiquitin-protein ligase that may possess E3 ubiquitin ligase activity in vitro. The sequence is that of Probable E3 ubiquitin-protein ligase RHB1A from Arabidopsis thaliana (Mouse-ear cress).